A 224-amino-acid chain; its full sequence is IAP-like protein p27 (224 aa).

A BIR repeat occupies 29–92 (VDARNQSFAI…GFWSRNCGFM (64 aa)). 4 residues coordinate Zn(2+): cysteine 62, cysteine 65, histidine 82, and cysteine 89.

Not essential for growth or virulence. Does not have antiapoptotic function. The chain is IAP-like protein p27 (p27) from Ornithodoros (relapsing fever ticks).